The primary structure comprises 446 residues: DDB1- and CUL4-associated factor 12-A (446 aa).

The segment covering 1 to 12 has biased composition (basic residues); it reads MTRRSVSRKRRA. The disordered stretch occupies residues 1-32; it reads MTRRSVSRKRRANPGSGPGEQSDWDHSAHKRK. WD repeat units follow at residues 132-173, 177-215, 245-284, and 333-370; these read SHQS…PVCV, GHNDWIFSIAWISDTMAVSGSRDGSMGLWEMTDEVVNKS, PVNCKVRALAFNSNNKELGAVSLDGFFHLWKAEQTLSKLL, and EQGSGIRSVSFYEHIVTVGTGQGALLFYDIRAQRFLED.

The protein belongs to the WD repeat DCAF12 family. In terms of assembly, component of the DCX(DCAF12) E3 ubiquitin ligase complex, at least composed of cul4 (cul4a or cul4b), ddb1, dcaf12 and rbx1.

The protein localises to the cytoplasm. It localises to the cytoskeleton. It is found in the microtubule organizing center. The protein resides in the centrosome. Its subcellular location is the nucleus. It functions in the pathway protein modification; protein ubiquitination. In terms of biological role, substrate-recognition component of a DCX (DDB1-CUL4-X-box) E3 ubiquitin-protein ligase complex of the DesCEND (destruction via C-end degrons) pathway, which recognizes a C-degron located at the extreme C terminus of target proteins, leading to their ubiquitination and degradation. The C-degron recognized by the DesCEND pathway is usually a motif of less than ten residues and can be present in full-length proteins, truncated proteins or proteolytically cleaved forms. The DCX(DCAF12) complex specifically recognizes proteins with a diglutamate (Glu-Glu) at the C-terminus leading to their ubiquitination and degradation. Also directly recognizes the C-terminal glutamate-leucine (Glu-Leu) degron as an alternative degron in proteins leading to their ubiquitination and degradation. The polypeptide is DDB1- and CUL4-associated factor 12-A (dcaf12-a) (Xenopus laevis (African clawed frog)).